A 167-amino-acid polypeptide reads, in one-letter code: Protein FimG (167 aa).

The N-terminal stretch at 1 to 23 (MKWCKRGYVLAAILALASATIQA) is a signal peptide. Cys-39 and Cys-77 are joined by a disulfide.

It belongs to the fimbrial protein family.

It localises to the fimbrium. Its function is as follows. Involved in regulation of length and mediation of adhesion of type 1 fimbriae (but not necessary for the production of fimbriae). Involved in the integration of FimH in the fimbriae. This is Protein FimG (fimG) from Escherichia coli (strain K12).